Here is a 650-residue protein sequence, read N- to C-terminus: Probable E3 ubiquitin ligase complex SCF subunit scon-2 (650 aa).

An F-box domain is found at 124 to 170; that stretch reads IDFISALPVELAQKVLCYLDTVSLTKAAQVSQRWRTLADSDAVWVRM. A disordered region spans residues 200–244; that stretch reads QRQLAKGGPQGRVTELADSHDSQDRSVNQHGKRPAAEAEEEDPIK. A compositionally biased stretch (basic and acidic residues) spans 214-223; it reads ELADSHDSQD. WD repeat units lie at residues 292–320, 332–360, 372–400, 411–441, and 453–488; these read GHEN…KIWN, GHTA…KVWN, AHTD…KIFD, GHSD…KLWD, and GHVG…AMSV. The interval 482 to 525 is disordered; that stretch reads NQDAMSVSSGGSGSPSMSHAQIERAGSPGSHSSSHNLLPSSLPS. Composition is skewed to low complexity over residues 487–499 and 507–525; these read SVSS…PSMS and GSPG…SLPS. WD repeat units follow at residues 528-564, 576-604, and 616-644; these read EDVR…RLWD, GHLE…KTWE, and GHCG…RLHS.

This sequence belongs to the WD repeat MET30/SCONB/SCON-2 family. As to quaternary structure, component of the SCF(scon-2) E3 ubiquitin ligase complex.

The protein operates within protein modification; protein ubiquitination. Its function is as follows. Component of the SCF(scon-2) E3 ubiquitin ligase complex involved in the regulation of sulfur metabolite repression, probably by mediating the inactivation or degradation of the metR transcription factor. This chain is Probable E3 ubiquitin ligase complex SCF subunit scon-2 (scon-2), found in Neurospora crassa (strain ATCC 24698 / 74-OR23-1A / CBS 708.71 / DSM 1257 / FGSC 987).